The primary structure comprises 793 residues: Vacuolar transporter chaperone complex subunit 4 (793 aa).

Over 1–684 (MPFSKAWRSA…MVKWAEQATR (684 aa)) the chain is Cytoplasmic. Residues K215, R286, R288, K312, K325, and R391 each coordinate ATP. A Mn(2+)-binding site is contributed by E441. K473 is a catalytic residue. The interval 575–595 (SVAPTMSPTDRPPSDEKKLTE) is disordered. Over residues 586–595 (PPSDEKKLTE) the composition is skewed to basic and acidic residues. The chain crosses the membrane as a helical span at residues 685 to 705 (VGVVGLAVIRFGNSMSLPNDM). Topologically, residues 706–717 (VAVHSFWRANFH) are vacuolar. A helical membrane pass occupies residues 718 to 738 (IVLGSLMVVVAECVLVYAYVT). At 739–760 (FKSRSRRVYARRKIRYDDRRGP) the chain is on the cytoplasmic side. A helical transmembrane segment spans residues 761-781 (VALTFVILAVILITVMMHVMV). Residues 782–793 (RYGPMLTGSDTF) lie on the Vacuolar side of the membrane.

Belongs to the VTC4 family. In terms of assembly, the VTC core complex is an integral membrane heterooligomer composed of at least the catalytic subunit vtc4 and the accessory subunits vtc1 and vtc2. vtc1 is a small membrane protein without hydrophilic domain. Vtc2 and vtc4 are related and have 2 hydrophilic domains that face the cytosol, an N-terminal SPX domain and the central core domain. The central core in vtc4 is the catalytic domain. It depends on Mn(2+) as a cofactor.

It localises to the acidocalcisome membrane. The enzyme catalyses [phosphate](n) + ATP = [phosphate](n+1) + ADP. Activity of the enzyme is Mn(2+)-dependent and enhanced in the presence of pyrophosphate (PPi). Functionally, component of a polyphosphate synthase complex that utilizes ATP to synthesize and translocate polyphosphate to acidocalcisomes in epimastigotes, insect-stages of Trypanosoma brucei. Catalytic subunit of the vacuolar transporter chaperone (VTC) complex. The VTC complex acts as a vacuolar polyphosphate polymerase that catalyzes the synthesis of inorganic polyphosphate (polyP) via transfer of phosphate from ATP to a growing polyP chain, releasing ADP. VTC exposes its catalytic domain vtc4 to the cytosol, where the growing polyP chain winds through a tunnel-shaped pocket, integrating cytoplasmic polymer synthesis with polyP membrane translocation. The VTC complex carries 9 vacuolar transmembrane domains, which are likely to constitute the translocation channel into the organelle lumen. PolyP synthesis is tightly coupled to its transport into the vacuole lumen, in order to avoid otherwise toxic intermediates in the cytosol, and it depends on the proton gradient across the membrane, formed by V-ATPase. The VTC complex also plays a role in vacuolar membrane fusion. Essential for infection and parasite survival in the mammalian host. This chain is Vacuolar transporter chaperone complex subunit 4 (vtc4), found in Trypanosoma brucei brucei (strain 927/4 GUTat10.1).